The following is a 723-amino-acid chain: Dipeptidyl aminopeptidase BI (723 aa).

The signal sequence occupies residues 1-23; that stretch reads MKPTSLLLAATVLMSTPITSALA. Active-site charge relay system residues include Ser574, Asp659, and His694.

The protein belongs to the peptidase S9A family. Monomer.

Its activity is regulated as follows. Nearly completely inhibited by 0.5 mM ZnCl(2), 0.1 mM N-tosyl-L-lysyl chloromethyl ketone (TLCK) and 0.1 mM leupeptin. Strongly inhibited by 0.5 mM CoCl(2) and 0.1 mM chymostatin. Activity is hardly affected by general serine protease inhibitors phenylmethanesulfonyl fluoride (PMSF), diisopropyl fluorophosphate (DFP) and N-tosyl-L-phenyl-alanyl chloromethyl ketone (TPCK) or by aspartyl protease inhibitor pepstatin A or by CaCl(2) and EDTA. Cysteine protease inhibitors, such as N-ethylmaleimide (NEM), iodoacetic acid and L-trans-epoxysuccinyl-leucylamido(4-guanido)butane (E-64) have no effect on activity. Functionally, sequentially removes dipeptide units (NH3-P2-P1-) from the amino termini of peptides and proteins. Is able to catalyze the removal of Asp-Arg from the amino termini of angiotensins I and II. Has slight endopeptidase activity on N-terminally blocked peptide derivatives which contain arginine residues at the P1 position. Does not hydrolyze Ala-Ala-Ala and Ala-Ala-Ala-Ala substrates or insulin beta chain. This chain is Dipeptidyl aminopeptidase BI, found in Pseudoxanthomonas mexicana.